Reading from the N-terminus, the 221-residue chain is Chaperone protein TorD (221 aa).

It belongs to the TorD/DmsD family. TorD subfamily.

It is found in the cytoplasm. Involved in the biogenesis of TorA. Acts on TorA before the insertion of the molybdenum cofactor and, as a result, probably favors a conformation of the apoenzyme that is competent for acquiring the cofactor. This is Chaperone protein TorD from Psychrobacter sp. (strain PRwf-1).